Reading from the N-terminus, the 341-residue chain is tRNA N6-adenosine threonylcarbamoyltransferase (341 aa).

2 residues coordinate Fe cation: H119 and H123. Residues 141–145 (MVSGG), D174, G187, and N279 each bind substrate. D307 is a Fe cation binding site.

Belongs to the KAE1 / TsaD family. Requires Fe(2+) as cofactor.

It localises to the cytoplasm. The catalysed reaction is L-threonylcarbamoyladenylate + adenosine(37) in tRNA = N(6)-L-threonylcarbamoyladenosine(37) in tRNA + AMP + H(+). Its function is as follows. Required for the formation of a threonylcarbamoyl group on adenosine at position 37 (t(6)A37) in tRNAs that read codons beginning with adenine. Is involved in the transfer of the threonylcarbamoyl moiety of threonylcarbamoyl-AMP (TC-AMP) to the N6 group of A37, together with TsaE and TsaB. TsaD likely plays a direct catalytic role in this reaction. The sequence is that of tRNA N6-adenosine threonylcarbamoyltransferase from Oenococcus oeni (strain ATCC BAA-331 / PSU-1).